Reading from the N-terminus, the 346-residue chain is Phenylalanine--tRNA ligase alpha subunit (346 aa).

Glutamate 261 contacts Mg(2+).

Belongs to the class-II aminoacyl-tRNA synthetase family. Phe-tRNA synthetase alpha subunit type 1 subfamily. Tetramer of two alpha and two beta subunits. Mg(2+) serves as cofactor.

The protein localises to the cytoplasm. The catalysed reaction is tRNA(Phe) + L-phenylalanine + ATP = L-phenylalanyl-tRNA(Phe) + AMP + diphosphate + H(+). This chain is Phenylalanine--tRNA ligase alpha subunit, found in Streptococcus agalactiae serotype Ia (strain ATCC 27591 / A909 / CDC SS700).